A 73-amino-acid polypeptide reads, in one-letter code: uncharacterized protein (73 aa).

Residues Ala37 to Ala57 form a helical membrane-spanning segment.

It localises to the membrane. This is an uncharacterized protein from Natronomonas pharaonis (strain ATCC 35678 / DSM 2160 / CIP 103997 / JCM 8858 / NBRC 14720 / NCIMB 2260 / Gabara) (Halobacterium pharaonis).